The chain runs to 248 residues: 1-(5-phosphoribosyl)-5-[(5-phosphoribosylamino)methylideneamino] imidazole-4-carboxamide isomerase (248 aa).

The active-site Proton acceptor is aspartate 11. Catalysis depends on aspartate 132, which acts as the Proton donor.

It belongs to the HisA/HisF family.

The protein resides in the cytoplasm. It carries out the reaction 1-(5-phospho-beta-D-ribosyl)-5-[(5-phospho-beta-D-ribosylamino)methylideneamino]imidazole-4-carboxamide = 5-[(5-phospho-1-deoxy-D-ribulos-1-ylimino)methylamino]-1-(5-phospho-beta-D-ribosyl)imidazole-4-carboxamide. It functions in the pathway amino-acid biosynthesis; L-histidine biosynthesis; L-histidine from 5-phospho-alpha-D-ribose 1-diphosphate: step 4/9. In Bradyrhizobium diazoefficiens (strain JCM 10833 / BCRC 13528 / IAM 13628 / NBRC 14792 / USDA 110), this protein is 1-(5-phosphoribosyl)-5-[(5-phosphoribosylamino)methylideneamino] imidazole-4-carboxamide isomerase.